A 336-amino-acid polypeptide reads, in one-letter code: UPF0324 membrane protein BR0028/BS1330_I0028 (336 aa).

A run of 11 helical transmembrane segments spans residues 9–26, 36–55, 68–90, 94–116, 128–150, 160–182, 189–211, 221–240, 247–269, 279–301, and 313–335; these read ILPGLGLSVAITAAAMVL, RAWLEALVIAILLGTAVRSL, FSAKLLLEIAVALLGASISASAV, GSGLIFGIAAVVAVAITLSYGIG, LVACGNSICGNSAIAAMAPVIGA, AFTAILGVIVVLTLPLLVPLLGL, ILAGLTVYAVPQVLAATAPVSLL, LVRVLMLGPVILVFALISGN, PGFFQLVPWFIIGFLAMMALHSL, AIQYASMLLTIISMAALGLGVDI, and LTAILSLIALCCISLGLIHMLGV.

It belongs to the UPF0324 family.

It localises to the cell membrane. In Brucella suis biovar 1 (strain 1330), this protein is UPF0324 membrane protein BR0028/BS1330_I0028.